The following is a 384-amino-acid chain: PqqA peptide cyclase (384 aa).

The 217-residue stretch at 14–230 (IPAPVGLLAE…EAARERLKGQ (217 aa)) folds into the Radical SAM core domain. Positions 28, 32, and 35 each coordinate [4Fe-4S] cluster.

It belongs to the radical SAM superfamily. PqqE family. As to quaternary structure, interacts with PqqD. The interaction is necessary for activity of PqqE. [4Fe-4S] cluster is required as a cofactor.

It carries out the reaction [PQQ precursor protein] + S-adenosyl-L-methionine = E-Y cross-linked-[PQQ precursor protein] + 5'-deoxyadenosine + L-methionine + H(+). It functions in the pathway cofactor biosynthesis; pyrroloquinoline quinone biosynthesis. Its function is as follows. Catalyzes the cross-linking of a glutamate residue and a tyrosine residue in the PqqA protein as part of the biosynthesis of pyrroloquinoline quinone (PQQ). The polypeptide is PqqA peptide cyclase (Methylorubrum extorquens (strain CM4 / NCIMB 13688) (Methylobacterium extorquens)).